We begin with the raw amino-acid sequence, 221 residues long: 7-cyano-7-deazaguanine synthase (221 aa).

7–17 (LSGGMDSTTLL) contributes to the ATP binding site. Cys-183, Cys-191, Cys-194, and Cys-197 together coordinate Zn(2+).

It belongs to the QueC family. Homodimer. Requires Zn(2+) as cofactor.

It catalyses the reaction 7-carboxy-7-deazaguanine + NH4(+) + ATP = 7-cyano-7-deazaguanine + ADP + phosphate + H2O + H(+). It participates in purine metabolism; 7-cyano-7-deazaguanine biosynthesis. Functionally, catalyzes the ATP-dependent conversion of 7-carboxy-7-deazaguanine (CDG) to 7-cyano-7-deazaguanine (preQ(0)). The chain is 7-cyano-7-deazaguanine synthase from Caldicellulosiruptor bescii (strain ATCC BAA-1888 / DSM 6725 / KCTC 15123 / Z-1320) (Anaerocellum thermophilum).